Reading from the N-terminus, the 143-residue chain is Transcriptional regulator MraZ (143 aa).

SpoVT-AbrB domains follow at residues 5 to 47 (EYNH…SSDE) and 76 to 119 (ASEC…SNVE).

The protein belongs to the MraZ family. In terms of assembly, forms oligomers.

It is found in the cytoplasm. Its subcellular location is the nucleoid. This chain is Transcriptional regulator MraZ, found in Alkaliphilus oremlandii (strain OhILAs) (Clostridium oremlandii (strain OhILAs)).